The chain runs to 339 residues: Dihydroorotate dehydrogenase (quinone) (339 aa).

FMN-binding positions include 64–68 (AGADK) and threonine 88. Lysine 68 contacts substrate. 113–117 (NRNGF) serves as a coordination point for substrate. The FMN site is built by asparagine 141 and asparagine 174. Asparagine 174 contacts substrate. Serine 177 acts as the Nucleophile in catalysis. Asparagine 179 provides a ligand contact to substrate. 2 residues coordinate FMN: lysine 219 and threonine 247. Residue 248–249 (NT) coordinates substrate. FMN contacts are provided by residues glycine 270, glycine 299, and 320 to 321 (YS).

Belongs to the dihydroorotate dehydrogenase family. Type 2 subfamily. Monomer. Requires FMN as cofactor.

The protein resides in the cell membrane. The catalysed reaction is (S)-dihydroorotate + a quinone = orotate + a quinol. The protein operates within pyrimidine metabolism; UMP biosynthesis via de novo pathway; orotate from (S)-dihydroorotate (quinone route): step 1/1. Functionally, catalyzes the conversion of dihydroorotate to orotate with quinone as electron acceptor. The chain is Dihydroorotate dehydrogenase (quinone) from Haemophilus influenzae (strain 86-028NP).